Consider the following 89-residue polypeptide: Sugar transporter SemiSWEET (89 aa).

The next 3 helical transmembrane spans lie at 4–27 (ILLTGLFAAFFTTFAFAPQSIKTI), 35–55 (ISVVMYIMFLTGVISWIAYGI), and 60–82 (FAVLIANIVTLFLAAPVLVITLI). The 53-residue stretch at 7–59 (TGLFAAFFTTFAFAPQSIKTIRTRNTEGISVVMYIMFLTGVISWIAYGIMRSD) folds into the PQ-loop domain.

Homodimer.

Its subcellular location is the cell membrane. Its function is as follows. The homodimer mediates transmembrane sugar transport down a concentration gradient. Transport is probably effected by rocking-type movements, where a cargo-binding cavity opens first on one and then on the other side of the membrane. This Escherichia coli (strain UMEA 3162-1) protein is Sugar transporter SemiSWEET.